A 322-amino-acid polypeptide reads, in one-letter code: MMIKNKKKLLFLCLLVILIATAYISFVTGTIKLSFNDLITKFTTGNNEAVDSIIDLRLPRILIALMVGAMLAVSGALLQAALQNPLAEANIIGVSSGALIMRALCMLFIPQLYFYLPLLSFIGGLIPFLIIILLHSKFRFNAVSMILVGVALFVLLNGVLEILTQNPLMKIPQGLTMKIWSDVYILAVSALLGLILTLLLSPKLNLLNLDDIQARSIGFNIDRYRWLTGLLAVFLASATVAIVGQLAFLGIIVPHVVRKLVGGNYRVLIPFSTVIGAWLLLVADLLGRVIQPPLEIPANAILMIVGGPMLIYLICQSQRNRI.

The next 9 helical transmembrane spans lie at 9–29 (LLFL…FVTG), 61–81 (ILIA…LQAA), 89–109 (ANII…MLFI), 114–134 (FYLP…IILL), 143–163 (VSMI…LEIL), 179–199 (IWSD…LTLL), 233–253 (VFLA…GIIV), 267–287 (VLIP…DLLG), and 294–314 (LEIP…IYLI).

It belongs to the binding-protein-dependent transport system permease family. FecCD subfamily.

It is found in the cell membrane. Part of the binding-protein-dependent transport system for heme-iron. Responsible for the translocation of the substrate across the membrane. The protein is Probable heme-iron transport system permease protein IsdF (isdF) of Staphylococcus aureus (strain MSSA476).